The sequence spans 151 residues: MTIWVDADACPNVIKEILYRAAERMQLPLILVANQALRVPPSRFIRTLRVAAGFDVADNEIVRQCETGDLVITADIPLAAEVLERGAAALNPRGERYSEATIRERLTMRDFMDTLRASGVQTGGPNSLSPRDRQHFAAELDKWWLEIQRKK.

The protein belongs to the UPF0178 family.

In Salmonella arizonae (strain ATCC BAA-731 / CDC346-86 / RSK2980), this protein is UPF0178 protein YaiI.